A 199-amino-acid chain; its full sequence is dITP/XTP pyrophosphatase (199 aa).

Residue 7 to 12 (TGNAGK) participates in substrate binding. The Mg(2+) site is built by E37 and D66. Residue D66 is the Proton acceptor of the active site. Residues S67, 146–149 (FGYD), K169, and 174–175 (HR) contribute to the substrate site.

Belongs to the HAM1 NTPase family. In terms of assembly, homodimer. Mg(2+) serves as cofactor.

It carries out the reaction XTP + H2O = XMP + diphosphate + H(+). It catalyses the reaction dITP + H2O = dIMP + diphosphate + H(+). The enzyme catalyses ITP + H2O = IMP + diphosphate + H(+). In terms of biological role, pyrophosphatase that catalyzes the hydrolysis of nucleoside triphosphates to their monophosphate derivatives, with a high preference for the non-canonical purine nucleotides XTP (xanthosine triphosphate), dITP (deoxyinosine triphosphate) and ITP. Seems to function as a house-cleaning enzyme that removes non-canonical purine nucleotides from the nucleotide pool, thus preventing their incorporation into DNA/RNA and avoiding chromosomal lesions. The chain is dITP/XTP pyrophosphatase from Deinococcus geothermalis (strain DSM 11300 / CIP 105573 / AG-3a).